A 513-amino-acid chain; its full sequence is NAD(P)H-quinone oxidoreductase subunit 2 (513 aa).

14 helical membrane passes run 15-35, 43-63, 80-100, 110-130, 133-153, 168-188, 211-231, 245-265, 281-301, 307-327, 335-355, 379-399, 401-421, and 467-487; these read VIWP…GDLI, WLPY…YFTW, LSIV…LMSI, LAEF…LSGA, LVMI…MTGY, LLIG…LYGL, LALA…ISAV, PTPV…ALAI, FIFI…ALAQ, MLAY…TAGT, IFYL…VILF, LCLS…GFFG, IYLF…VGLV, and VGIV…NPLF.

This sequence belongs to the complex I subunit 2 family. In terms of assembly, NDH-1 can be composed of about 15 different subunits; different subcomplexes with different compositions have been identified which probably have different functions.

It localises to the cellular thylakoid membrane. The enzyme catalyses a plastoquinone + NADH + (n+1) H(+)(in) = a plastoquinol + NAD(+) + n H(+)(out). The catalysed reaction is a plastoquinone + NADPH + (n+1) H(+)(in) = a plastoquinol + NADP(+) + n H(+)(out). In terms of biological role, NDH-1 shuttles electrons from an unknown electron donor, via FMN and iron-sulfur (Fe-S) centers, to quinones in the respiratory and/or the photosynthetic chain. The immediate electron acceptor for the enzyme in this species is believed to be plastoquinone. Couples the redox reaction to proton translocation, and thus conserves the redox energy in a proton gradient. Cyanobacterial NDH-1 also plays a role in inorganic carbon-concentration. The chain is NAD(P)H-quinone oxidoreductase subunit 2 from Microcystis aeruginosa (strain NIES-843 / IAM M-2473).